The chain runs to 296 residues: tRNA dimethylallyltransferase (296 aa).

ATP is bound at residue 2 to 9; the sequence is GPTASGKT. 4–9 lines the substrate pocket; sequence TASGKT. Interaction with substrate tRNA stretches follow at residues 27–30, 151–155, and 232–237; these read DSAL, QRLSR, and RCVGYR.

Belongs to the IPP transferase family. Monomer. Requires Mg(2+) as cofactor.

It catalyses the reaction adenosine(37) in tRNA + dimethylallyl diphosphate = N(6)-dimethylallyladenosine(37) in tRNA + diphosphate. In terms of biological role, catalyzes the transfer of a dimethylallyl group onto the adenine at position 37 in tRNAs that read codons beginning with uridine, leading to the formation of N6-(dimethylallyl)adenosine (i(6)A). This chain is tRNA dimethylallyltransferase, found in Shewanella sp. (strain MR-4).